Here is a 386-residue protein sequence, read N- to C-terminus: L-prolyl-[peptidyl-carrier protein] dehydrogenase (386 aa).

FAD contacts are provided by residues 125–134 (NAATEPDAGS) and 158–160 (FIT). The Proton acceptor role is filled by E244. Residues R270, Q281, 338–342 (QTFGG), and 367–369 (TND) each bind FAD.

This sequence belongs to the acyl-CoA dehydrogenase family. FAD serves as cofactor.

The enzyme catalyses L-prolyl-[peptidyl-carrier protein] + 2 oxidized [electron-transfer flavoprotein] + H(+) = (1H-pyrrole-2-carbonyl)-[peptidyl-carrier protein] + 2 reduced [electron-transfer flavoprotein]. It functions in the pathway antibiotic biosynthesis; prodigiosin biosynthesis. In terms of biological role, involved in the biosynthesis of 4-methoxy-2,2'-bipyrrole-5-carbaldehyde (MBC), one of the terminal products involved in the biosynthesis of the red antibiotic prodigiosin (Pig). Catalyzes the desaturation of the L-prolyl-[PigG] to yield 1H-pyrrole-2-carbonyl-[PigG]. This Serratia sp. (strain ATCC 39006) (Prodigiosinella confusarubida) protein is L-prolyl-[peptidyl-carrier protein] dehydrogenase.